A 178-amino-acid chain; its full sequence is MLSFFKTLSTKRSAWFLLFSSALLLEAIALYFQHGMGLAPCVMCIYERVAILGIAFSGLLGLLYPSSMLLRLVALLIGLSSAIKGLMISITHLDLQLYPAPWKQCSAVAEFPETLPLDQWFPALFLPSGSCSEVTWQFLGFSMVQWIVVIFALYTLLLALIFISQVKRLKPKQRRLFH.

The Cytoplasmic segment spans residues 1–14 (MLSFFKTLSTKRSA). The helical transmembrane segment at 15-31 (WFLLFSSALLLEAIALY) threads the bilayer. The Periplasmic segment spans residues 32–49 (FQHGMGLAPCVMCIYERV). A disulfide bridge connects residues Cys-41 and Cys-44. Residues 50–65 (AILGIAFSGLLGLLYP) traverse the membrane as a helical segment. Residues 66–72 (SSMLLRL) lie on the Cytoplasmic side of the membrane. The helical transmembrane segment at 73–90 (VALLIGLSSAIKGLMISI) threads the bilayer. The Periplasmic portion of the chain corresponds to 91–145 (THLDLQLYPAPWKQCSAVAEFPETLPLDQWFPALFLPSGSCSEVTWQFLGFSMVQ). The cysteines at positions 105 and 131 are disulfide-linked. A helical membrane pass occupies residues 146–164 (WIVVIFALYTLLLALIFIS). At 165-177 (QVKRLKPKQRRLF) the chain is on the cytoplasmic side.

Belongs to the DsbB family.

The protein localises to the cell inner membrane. In terms of biological role, required for disulfide bond formation in some periplasmic proteins. Acts by oxidizing the DsbA protein. The polypeptide is Disulfide bond formation protein B (Pasteurella multocida (strain Pm70)).